Consider the following 107-residue polypeptide: MKFSTTPTLEGQQITEYCGVVTGEAILGANIFRDFFAGIRDIVGGRSGAYEKELRKARQIAFAELEEQAEALGAQAVVGIDIDYETVGKDSSMLMVSVSGTAVKLRH.

This sequence belongs to the UPF0145 family.

The protein is UPF0145 protein ETA_21660 of Erwinia tasmaniensis (strain DSM 17950 / CFBP 7177 / CIP 109463 / NCPPB 4357 / Et1/99).